Consider the following 90-residue polypeptide: Leech factor Xa inhibitor (90 aa).

Its subcellular location is the secreted. In terms of biological role, potent anticoagulant inhibiting the amidolytic activity of factor Xa (F10) (Ki=4nM) and reducing its ability to activate prothrombin (F2) in the prothrombinase complex (EC(50)=40nM). This Haementeria depressa (Leech) protein is Leech factor Xa inhibitor.